A 335-amino-acid chain; its full sequence is LIM and SH3 domain protein F42H10.3 (335 aa).

An LIM zinc-binding domain is found at 5–65; it reads CAREDCGKTV…DPHYPKTVAS (61 aa). Nebulin repeat units lie at residues 66-97 and 98-132; these read VMAD…KMKG and TKIE…QKAR. Over residues 128 to 142 the composition is skewed to basic and acidic residues; sequence DQKARQEEVRPKEEI. Disordered stretches follow at residues 128–151 and 233–264; these read DQKA…PTPI and DFAG…ISPT. Over residues 242–260 the composition is skewed to low complexity; sequence SNSISSTSPHSTLSSPQST. An SH3 domain is found at 266-327; the sequence is KAGFAVKAIY…PANYVQPHKL (62 aa).

In Caenorhabditis elegans, this protein is LIM and SH3 domain protein F42H10.3.